Consider the following 883-residue polypeptide: Probable valine--tRNA ligase, cytoplasmic (883 aa).

Residues 1–23 (MTLKMDRKALKEEKKKQKLEKFL) are compositionally biased toward basic and acidic residues. The tract at residues 1 to 49 (MTLKMDRKALKEEKKKQKLEKFLNKKTTQSKISKAPKPAKNKSSSGYDP) is disordered. Residues 30–45 (SKISKAPKPAKNKSSS) show a composition bias toward low complexity. The 'HIGH' region motif lies at 82–92 (PNITGSLHIGH). The 'KMSKS' region motif lies at 586–590 (KMSKS). Lys589 contributes to the ATP binding site.

It belongs to the class-I aminoacyl-tRNA synthetase family.

It localises to the cytoplasm. It carries out the reaction tRNA(Val) + L-valine + ATP = L-valyl-tRNA(Val) + AMP + diphosphate. This chain is Probable valine--tRNA ligase, cytoplasmic, found in Vairimorpha ceranae (strain BRL01) (Microsporidian parasite).